The sequence spans 322 residues: HPr kinase/phosphorylase (322 aa).

Catalysis depends on residues histidine 146 and lysine 167. Position 161–168 (161–168 (GDSGLGKS)) interacts with ATP. Residue serine 168 coordinates Mg(2+). Aspartate 185 serves as the catalytic Proton acceptor; for phosphorylation activity. Proton donor; for dephosphorylation activity. The interval 209-218 (LEVRGLGLLD) is important for the catalytic mechanism of both phosphorylation and dephosphorylation. Glutamate 210 lines the Mg(2+) pocket. The active site involves arginine 250. The important for the catalytic mechanism of dephosphorylation stretch occupies residues 271–276 (QVAAGR).

The protein belongs to the HPrK/P family. Homohexamer. Mg(2+) serves as cofactor.

The catalysed reaction is [HPr protein]-L-serine + ATP = [HPr protein]-O-phospho-L-serine + ADP + H(+). The enzyme catalyses [HPr protein]-O-phospho-L-serine + phosphate + H(+) = [HPr protein]-L-serine + diphosphate. Its function is as follows. Catalyzes the ATP- as well as the pyrophosphate-dependent phosphorylation of a specific serine residue in HPr, a phosphocarrier protein of the phosphoenolpyruvate-dependent sugar phosphotransferase system (PTS). HprK/P also catalyzes the pyrophosphate-producing, inorganic phosphate-dependent dephosphorylation (phosphorolysis) of seryl-phosphorylated HPr (P-Ser-HPr). The polypeptide is HPr kinase/phosphorylase (Paraburkholderia phytofirmans (strain DSM 17436 / LMG 22146 / PsJN) (Burkholderia phytofirmans)).